The following is a 474-amino-acid chain: 3-isopropylmalate dehydratase large subunit (474 aa).

Residues cysteine 355, cysteine 415, and cysteine 418 each coordinate [4Fe-4S] cluster.

It belongs to the aconitase/IPM isomerase family. LeuC type 1 subfamily. In terms of assembly, heterodimer of LeuC and LeuD. [4Fe-4S] cluster is required as a cofactor.

The catalysed reaction is (2R,3S)-3-isopropylmalate = (2S)-2-isopropylmalate. Its pathway is amino-acid biosynthesis; L-leucine biosynthesis; L-leucine from 3-methyl-2-oxobutanoate: step 2/4. Catalyzes the isomerization between 2-isopropylmalate and 3-isopropylmalate, via the formation of 2-isopropylmaleate. The polypeptide is 3-isopropylmalate dehydratase large subunit (Shewanella sp. (strain MR-7)).